The following is a 499-amino-acid chain: Protein phosphatase PP2A 55 kDa regulatory subunit (499 aa).

The disordered stretch occupies residues 1–30 (MGRWGRQSPVLEPPDPQMQTTPPPPTLPPR). A compositionally biased stretch (pro residues) spans 11 to 28 (LEPPDPQMQTTPPPPTLP). WD repeat units follow at residues 79–118 (TDADIISCVEFNHDGELLATGDKGGRVVIFQRDPASKAAN), 144–185 (EIEE…KSFG), 228–266 (AHTYHINSISVNSDQETFLSADDLRINLWHLEVVNQSYN), 277–317 (ELTE…LCDR), 336–374 (EIISSISDVKLSNSGRYMISRDYLSIKVWDLHMETKPIE), 391–432 (ENDC…DVTL), and 467–498 (DFNKKILHTAWHPEENIIAVAATNNLFIFQDK).

This sequence belongs to the phosphatase 2A regulatory subunit B family. In terms of assembly, PP2A exists in several trimeric forms, all of which consist of a core composed of a catalytic subunit associated with a 65 kDa regulatory subunit (PR65) (subunit A). The core complex associates with a third, variable subunit (subunit B), which confers distinct properties to the holoenzyme.

In terms of biological role, could perform a substrate recognition function or could be responsible for targeting the enzyme complex to the appropriate subcellular compartment. In Drosophila melanogaster (Fruit fly), this protein is Protein phosphatase PP2A 55 kDa regulatory subunit (tws).